The following is a 421-amino-acid chain: ATP-dependent RNA helicase RhlB (421 aa).

A Q motif motif is present at residues 9-37; that stretch reads QKFSDFALHPKVVEALEKKGFHNCTPIQA. The Helicase ATP-binding domain occupies 40 to 219; that stretch reads LPLTLAGRDV…FEQMNNAEYI (180 aa). 53 to 60 is an ATP binding site; sequence AQTGTGKT. The short motif at 165 to 168 is the DEAD box element; it reads DEAD. Residues 245–390 enclose the Helicase C-terminal domain; it reads RLLQTLIEEE…VSKYNPDALM (146 aa). Residues 392-421 are disordered; that stretch reads DLPKPLRLTRPRTGNGPRRTGAPRNRRRSG. Low complexity predominate over residues 402–414; sequence PRTGNGPRRTGAP.

The protein belongs to the DEAD box helicase family. RhlB subfamily. In terms of assembly, component of the RNA degradosome, which is a multiprotein complex involved in RNA processing and mRNA degradation.

Its subcellular location is the cytoplasm. The enzyme catalyses ATP + H2O = ADP + phosphate + H(+). DEAD-box RNA helicase involved in RNA degradation. Has RNA-dependent ATPase activity and unwinds double-stranded RNA. The polypeptide is ATP-dependent RNA helicase RhlB (Escherichia coli (strain SMS-3-5 / SECEC)).